The sequence spans 283 residues: Bifunctional protein FolD (283 aa).

Residues 165–167 (GRS), Ser190, and Val231 each bind NADP(+).

This sequence belongs to the tetrahydrofolate dehydrogenase/cyclohydrolase family. In terms of assembly, homodimer.

It catalyses the reaction (6R)-5,10-methylene-5,6,7,8-tetrahydrofolate + NADP(+) = (6R)-5,10-methenyltetrahydrofolate + NADPH. It carries out the reaction (6R)-5,10-methenyltetrahydrofolate + H2O = (6R)-10-formyltetrahydrofolate + H(+). The protein operates within one-carbon metabolism; tetrahydrofolate interconversion. Functionally, catalyzes the oxidation of 5,10-methylenetetrahydrofolate to 5,10-methenyltetrahydrofolate and then the hydrolysis of 5,10-methenyltetrahydrofolate to 10-formyltetrahydrofolate. This chain is Bifunctional protein FolD, found in Bacillus velezensis (strain DSM 23117 / BGSC 10A6 / LMG 26770 / FZB42) (Bacillus amyloliquefaciens subsp. plantarum).